The following is a 40-amino-acid chain: MMSEGGRIPLWIVATVAGMGVIVIVGLFFYGAYAGLGSSL.

The residue at position 2 (Met-2) is an N-acetylmethionine. Residues Met-2–Trp-11 are Cytoplasmic-facing. A helical membrane pass occupies residues Ile-12–Gly-26. Residues Leu-27–Leu-40 are Lumenal-facing.

This sequence belongs to the PsbJ family. In terms of assembly, PSII is composed of 1 copy each of membrane proteins PsbA, PsbB, PsbC, PsbD, PsbE, PsbF, PsbH, PsbI, PsbJ, PsbK, PsbL, PsbM, PsbT, PsbX, PsbY, PsbZ, Psb30/Ycf12, peripheral proteins PsbO, CyanoQ (PsbQ), PsbU, PsbV and a large number of cofactors. It forms dimeric complexes. PSII binds multiple chlorophylls, carotenoids and specific lipids. is required as a cofactor.

It localises to the cellular thylakoid membrane. In terms of biological role, one of the components of the core complex of photosystem II (PSII). PSII is a light-driven water:plastoquinone oxidoreductase that uses light energy to abstract electrons from H(2)O, generating O(2) and a proton gradient subsequently used for ATP formation. It consists of a core antenna complex that captures photons, and an electron transfer chain that converts photonic excitation into a charge separation. Functionally, may play a regulatory role in PSII biogenesis. The sequence is that of Photosystem II reaction center protein J from Thermosynechococcus vestitus (strain NIES-2133 / IAM M-273 / BP-1).